A 436-amino-acid chain; its full sequence is p-aminobenzoyl-glutamate hydrolase subunit A (436 aa).

It belongs to the peptidase M20 family. Forms a heterodimer with AbgB. It depends on Mn(2+) as a cofactor.

Functionally, component of the p-aminobenzoyl-glutamate hydrolase multicomponent enzyme system which catalyzes the cleavage of p-aminobenzoyl-glutamate (PABA-GLU) to form p-aminobenzoate (PABA) and glutamate. AbgAB does not degrade dipeptides and the physiological role of abgABT should be clarified. This chain is p-aminobenzoyl-glutamate hydrolase subunit A (abgA), found in Escherichia coli (strain K12).